A 161-amino-acid chain; its full sequence is Troponin C, slow skeletal and cardiac muscles (161 aa).

Met1 carries the N-acetylmethionine modification. 4 consecutive EF-hand domains span residues 16-51, 52-87, 92-127, and 128-161; these read QKNEFKAAFDIFVLGAEDGCISTKELGKVMRMLGQN, PTPEELQEMIDEVDEDGSGTVDFDEFLVMMVRCMKD, KSEEELSDLFRMFDKNADGYIDLEELKIMLQATGET, and ITEDDIEELMKDGDKNNDGRIDYDEFLEFMKGVE. 5 residues coordinate Ca(2+): Asp65, Asp67, Ser69, Thr71, and Glu76. Ser98 is modified (phosphoserine). Asp105, Asn107, Asp109, Tyr111, Glu116, Asp141, Asn143, Asp145, Arg147, and Glu152 together coordinate Ca(2+).

Belongs to the troponin C family.

Functionally, troponin is the central regulatory protein of striated muscle contraction. Tn consists of three components: Tn-I which is the inhibitor of actomyosin ATPase, Tn-T which contains the binding site for tropomyosin and Tn-C. The binding of calcium to Tn-C abolishes the inhibitory action of Tn on actin filaments. The polypeptide is Troponin C, slow skeletal and cardiac muscles (TNNC1) (Bos taurus (Bovine)).